The chain runs to 424 residues: L-glutamine:2-deoxy-scyllo-inosose aminotransferase (424 aa).

Lysine 202 is subject to N6-(pyridoxal phosphate)lysine.

Belongs to the DegT/DnrJ/EryC1 family. L-glutamine:2-deoxy-scyllo-inosose/scyllo-inosose aminotransferase subfamily. Pyridoxal 5'-phosphate is required as a cofactor.

The enzyme catalyses 2-deoxy-L-scyllo-inosose + L-glutamine = 2-deoxy-scyllo-inosamine + 2-oxoglutaramate. It carries out the reaction 3-amino-2,3-dideoxy-scyllo-inosose + L-glutamine = 2-deoxystreptamine + 2-oxoglutaramate. Its pathway is metabolic intermediate biosynthesis; 2-deoxystreptamine biosynthesis; 2-deoxystreptamine from D-glucose 6-phosphate: step 2/4. It functions in the pathway antibiotic biosynthesis; lividomycin biosynthesis. In terms of biological role, catalyzes the PLP-dependent transamination of 2-deoxy-scyllo-inosose (2-DOI) to form 2-deoxy-scyllo-inosamine (2-DOIA) using L-glutamine as the amino donor. Also catalyzes the transamination of 3-amino-2,3-dideoxy-scyllo-inosose (keto-2-DOIA) into 2-deoxystreptamine (2-DOS). The sequence is that of L-glutamine:2-deoxy-scyllo-inosose aminotransferase (livS) from Streptomyces lividus.